A 339-amino-acid polypeptide reads, in one-letter code: Geranylgeranyl transferase type-2 subunit beta (339 aa).

A Phosphothreonine modification is found at T11. PFTB repeat units follow at residues 28–69 (LEKH…DLMG), 76–117 (REEI…TLYD), 124–165 (VDKV…ALLG), 172–213 (VEKA…AITS), 220–261 (SDLL…KIIG), and 268–310 (REKL…SLLG). Geranylgeranyl diphosphate is bound by residues 198 to 200 (HAG) and 240 to 243 (RPEK). Zn(2+)-binding residues include D246 and C248. Residues Y249 and 249–252 (YSWW) each bind geranylgeranyl diphosphate. H298 contributes to the Zn(2+) binding site.

This sequence belongs to the protein prenyltransferase subunit beta family. Heterotrimer composed of RABGGTA, RABGGTB and CHM; within this trimer, RABGGTA and RABGGTB form the catalytic component B, while CHM (component A) mediates peptide substrate binding. The Rab GGTase dimer (RGGT) interacts with CHM (component A) prior to Rab protein binding; the association is stabilized by geranylgeranyl pyrophosphate (GGpp). The CHM:RGGT:Rab complex is destabilized by GGpp. Interaction of RABGGTB with prenylated PTP4A2 precludes its association with RABGGTA and inhibits enzyme activity. Interacts with CHODL. Interacts with non-phosphorylated form of RAB8A; phosphorylation of RAB8A at 'Thr-72' disrupts this interaction. Zn(2+) is required as a cofactor. Ubiquitous. Detected in all the major organs in adult animals.

The catalysed reaction is geranylgeranyl diphosphate + L-cysteinyl-[protein] = S-geranylgeranyl-L-cysteinyl-[protein] + diphosphate. Its activity is regulated as follows. The enzymatic reaction requires the aid of a Rab escort protein (also called component A), such as CHM. In terms of biological role, catalyzes the transfer of a geranylgeranyl moiety from geranylgeranyl diphosphate to both cysteines of Rab proteins with the C-terminal sequence -XXCC, -XCXC and -CCXX, such as RAB1A, RAB3A, RAB5A and RAB7A. The sequence is that of Geranylgeranyl transferase type-2 subunit beta (Rabggtb) from Mus musculus (Mouse).